Reading from the N-terminus, the 633-residue chain is Probable potassium transport system protein Kup 2 (633 aa).

A run of 11 helical transmembrane segments spans residues 59 to 79, 110 to 130, 145 to 165, 173 to 193, 219 to 239, 256 to 276, 287 to 307, 345 to 365, 374 to 394, 402 to 422, and 429 to 449; these read ISAILWALMVVVSLKYVILIM, ILLVGLFGAALFYGDAVLTPA, TALQPYVLPASVGVLIALFLF, IGALFGPVTIVWFLALAAAGI, GFASFAVLGAVLLAFTGAEAL, FGLVFPALALNYLGQGALIIV, LLYPSWALYPMVALATAATVI, IYIPTLNGMLLVAVLVAVLGF, AYGVAVTGTMLVTTLLTFFVI, LLLSLVATGFFIAVDMAFVSS, and EGGWFPLVVGAGIFVVMLTWV.

This sequence belongs to the HAK/KUP transporter (TC 2.A.72) family.

The protein localises to the cell inner membrane. It catalyses the reaction K(+)(in) + H(+)(in) = K(+)(out) + H(+)(out). Its function is as follows. Transport of potassium into the cell. Likely operates as a K(+):H(+) symporter. This Cupriavidus necator (strain ATCC 17699 / DSM 428 / KCTC 22496 / NCIMB 10442 / H16 / Stanier 337) (Ralstonia eutropha) protein is Probable potassium transport system protein Kup 2.